A 384-amino-acid polypeptide reads, in one-letter code: S-adenosylmethionine synthase (384 aa).

ATP is bound at residue His15. Asp17 contributes to the Mg(2+) binding site. A K(+)-binding site is contributed by Glu43. Positions 56 and 99 each coordinate L-methionine. The tract at residues 99-109 (QSPDINQGVDR) is flexible loop. Residues 164-166 (DAK), 230-231 (RF), Asp239, 245-246 (RK), Ala262, and Lys266 each bind ATP. Asp239 is a binding site for L-methionine. Lys270 contributes to the L-methionine binding site.

This sequence belongs to the AdoMet synthase family. As to quaternary structure, homotetramer; dimer of dimers. Mg(2+) is required as a cofactor. The cofactor is K(+).

It is found in the cytoplasm. It catalyses the reaction L-methionine + ATP + H2O = S-adenosyl-L-methionine + phosphate + diphosphate. It functions in the pathway amino-acid biosynthesis; S-adenosyl-L-methionine biosynthesis; S-adenosyl-L-methionine from L-methionine: step 1/1. Its function is as follows. Catalyzes the formation of S-adenosylmethionine (AdoMet) from methionine and ATP. The overall synthetic reaction is composed of two sequential steps, AdoMet formation and the subsequent tripolyphosphate hydrolysis which occurs prior to release of AdoMet from the enzyme. The polypeptide is S-adenosylmethionine synthase (Photobacterium profundum (strain SS9)).